The primary structure comprises 312 residues: Malate dehydrogenase (312 aa).

NAD(+) contacts are provided by residues 12–17 (GAGFTG) and Asp36. Substrate contacts are provided by Arg87 and Arg93. NAD(+)-binding positions include Asn100 and 123–125 (LTN). Asn125 serves as a coordination point for substrate. Ser149 bears the Phosphoserine mark. Arg156 is a substrate binding site. His180 functions as the Proton acceptor in the catalytic mechanism.

Belongs to the LDH/MDH superfamily. MDH type 3 family.

It catalyses the reaction (S)-malate + NAD(+) = oxaloacetate + NADH + H(+). In terms of biological role, catalyzes the reversible oxidation of malate to oxaloacetate. The protein is Malate dehydrogenase of Bacillus cereus (strain ATCC 14579 / DSM 31 / CCUG 7414 / JCM 2152 / NBRC 15305 / NCIMB 9373 / NCTC 2599 / NRRL B-3711).